Reading from the N-terminus, the 651-residue chain is Protein transport protein SEC9 (651 aa).

Disordered regions lie at residues 1–22, 53–299, and 313–332; these read MGLKKFFKIKPPEEATPEQNKD, AEDK…QAPM, and RNSEVDLNEEPRTGEFDFEE. Phosphoserine is present on residues Ser79 and Ser92. Over residues 86–112 the composition is skewed to polar residues; it reads NEATAGSNRGSSGTQDLGNGAESNSMQ. Residues 120–129 show a composition bias toward basic and acidic residues; the sequence is DDYRYDDDPY. Composition is skewed to polar residues over residues 157-218 and 244-284; these read GTSL…SLDQ and DSNT…ANPY. A phosphoserine mark is found at Ser186, Ser190, Ser213, Ser271, and Ser273. The segment covering 285–296 has biased composition (low complexity); sequence SSRSVRQPQSQQ. Residues 313-327 show a composition bias toward basic and acidic residues; that stretch reads RNSEVDLNEEPRTGE. The residue at position 315 (Ser315) is a Phosphoserine. At Thr355 the chain carries Phosphothreonine. Ser359 is subject to Phosphoserine. 2 t-SNARE coiled-coil homology domains span residues 434-496 and 588-650; these read KFTK…VAEL and DEME…LAGI.

This sequence belongs to the SNAP-25 family. Interacts with SRO7 and SRO77.

In terms of biological role, component of a SNARE complex that may be the effector of SEC4 function in exocytosis. The sequence is that of Protein transport protein SEC9 (SEC9) from Saccharomyces cerevisiae (strain ATCC 204508 / S288c) (Baker's yeast).